A 364-amino-acid chain; its full sequence is Autophagy-related protein 14 (364 aa).

A cysteine repeats region spans residues cysteine 5–cysteine 20. Positions leucine 38 to arginine 114 form a coiled coil.

Belongs to the ATG14 family. As to quaternary structure, component of the autophagy-specific VPS34 PI3-kinase complex I composed of VPS15, VPS30, VPS34, ATG14 and ATG38. Interacts directly with ATG38.

The protein localises to the preautophagosomal structure membrane. It localises to the vacuole membrane. In terms of biological role, required for cytoplasm to vacuole transport (Cvt) and autophagy as a part of the autophagy-specific VPS34 PI3-kinase complex I. This complex is essential to recruit the ATG8-phosphatidylinositol conjugate and the ATG12-ATG5 conjugate to the pre-autophagosomal structure. ATG14 mediates the specific binding of the VPS34 PI3-kinase complex I to the preautophagosomal structure (PAS). Required for survival and/or proliferation in kidneys and in brain. This is Autophagy-related protein 14 from Candida glabrata (strain ATCC 2001 / BCRC 20586 / JCM 3761 / NBRC 0622 / NRRL Y-65 / CBS 138) (Yeast).